Consider the following 423-residue polypeptide: Salicylate 5-hydroxylase, large oxygenase component (423 aa).

The interval 1–20 is disordered; sequence MSEPQRLKPVFPQDPKWPGE. The Rieske domain maps to 49–168; it reads WCYVGLEAEI…VAARGGAVFA (120 aa). Positions 91, 93, 111, and 114 each coordinate [2Fe-2S] cluster. Fe cation is bound by residues histidine 224, histidine 229, and aspartate 370.

This sequence belongs to the bacterial ring-hydroxylating dioxygenase alpha subunit family. The salicylate 5-hydroxylase (S5H) multicomponent enzyme system is composed of an electron transfer component and an oxygenase component. The electron transfer component is comprised of a ferredoxin reductase (NagAa) and a ferredoxin (NagAb), and the oxygenase component is formed by a large subunit (NagG) and a small subunit (NagH). The cofactor is Fe cation. It depends on [2Fe-2S] cluster as a cofactor.

The enzyme catalyses salicylate + NADH + O2 + H(+) = 2,5-dihydroxybenzoate + NAD(+) + H2O. Its pathway is aromatic compound metabolism; naphthalene degradation. In terms of biological role, oxygenase component of the salicylate 5-hydroxylase (S5H) multicomponent enzyme system which catalyzes the 5-hydroxylation of salicylate to gentisate. Active only on substrates with a ring-substituted carboxylate group with an adjacent hydroxyl group. Primarily active against salicylate and substituted salicylates, but not against 2-hydroxycinnamate, 3-hydroxycinnamate, 2-hydroxyphenylacetate, 3-hydroxyphenylacetate, 2-hydroxybenzophenone, 1-hydroxy-2-naphthoate, 4-methoxysalicylate or 2-hydroxyacetophenone. This Ralstonia sp protein is Salicylate 5-hydroxylase, large oxygenase component.